Here is a 179-residue protein sequence, read N- to C-terminus: Exosome complex component Csl4 (179 aa).

In terms of domain architecture, S1 motif spans 58-137; the sequence is GDVVLGRVVD…RLSTKEEEMG (80 aa). Positions 143, 146, 159, and 162 each coordinate Zn(2+).

The protein belongs to the CSL4 family. As to quaternary structure, component of the archaeal exosome complex. Forms a trimer of Rrp4 and/or Csl4 subunits. The trimer associates with a hexameric ring-like arrangement composed of 3 Rrp41-Rrp42 heterodimers. Interacts with DnaG.

The protein localises to the cytoplasm. Its function is as follows. Non-catalytic component of the exosome, which is a complex involved in RNA degradation. Increases the RNA binding and the efficiency of RNA degradation. Helpful for the interaction of the exosome with A-poor RNAs. The polypeptide is Exosome complex component Csl4 (Archaeoglobus fulgidus (strain ATCC 49558 / DSM 4304 / JCM 9628 / NBRC 100126 / VC-16)).